A 1374-amino-acid chain; its full sequence is MYQYSNQTGNGVYGNPPMQPLQNYGSSGYQQTAPMQQPLQTGYQQPMQQTMNQNQGMQLPQQQYQQQQPLQQQPMQQQPMQQQSFQQPQLQQPLQQQPTQTGMQQQPLQQQLTQSGMLQQPLQPQMQQSSQTIQPNQLNVQNTVQSQQSVQPLLPQQTGFYRQGNQPVLEPLKPTATGFVNSFANNGLDNNLKIPAIRLSFITAQDQAKFETLFRSIVTKGSNTVSGENCRAILMKSGLQPSQLARIWQLSDTNRAGELLFPEFALAMHLINNVLQGDSIPYELDSKTKNEVSSFIDAINLSVVSTESDFKTPFDDLFKPQQSLQPQGTGFLPQTSFGLPAQPTGGFGQPQPTTFGQLQAQVTGGFGQPQPTTFGLQPQTTGGFVQAQQVTGGIAQQPSMNPLTQQGTGFAQNQQGTGGFLQQQGTGSFNNAGFVQPQNTGSFVPQQQQQPVVQSQPIAPQSTGGFGPPMPTTFGIQPQSTGGFVQPQVTGGLQPALTGNIPQTSFGAQPFNQQLQPQATGYLPPSQFSATMPLTAQKTGFGNNEIYAQSNFNGPSFSTQESDIITSEEKSLFYKIFETFSQNRGVLDSATAVEIFRKSGLNRSDLEKIWNLCDINNTGQLNKQEFALGMHLVYGRLNGRSIPDRLPPSLIPSSTKILDNVKNQLISSSSDGNRKSFTRMDALSYKNDDNDKLPNFRNRRKNYPTDNDADKERQRRQEREREEAAKKKEQERKTKMDIERARKQGSFTNSEPEFTDVSVSEIEDIKRRITEAQQKLAVRNQSIPNDLKKRFNEVVARLPTLFVEIYKVDTEIMQARIELCKRRTPSSIIGTGPGGSITEDDRRKAKSKALLRSRMNALTGKGDNSDEPDIESESFTKEIEKIQSESAQNKKIIKDIRISISELSAPIRSIMTGSLPTCSSTDFEKWEIGVGLENDVREFVLTLKKGLLYVSEPSHMNSNQTLSHPPAAALKKEATGEDRAAQLKEQAQKRMKERLAKFGISRRETRDLESSKQQESGSTPDAVPAAQTANASQTPFEEVISSPQKMEVTSTAGEDNEEEDEEERKLKEQLELLKQKKNAEKEKRLADLRRQIEEAEKEEEHPSVAQSNSGNVQSSSNQPASVPVANSQPQNLQNTHITTKPLSLNQTGSSYDMASNTYFKPTQTSQSAFDREKAEQQRKIQRGLESDDDGWSDDDDDLYSKPNTAPQTAPVLDSSNTPQPGMNASVPAPIAPPIPTPQASSPAVPVAPPIPAVTPSESSIPMTSNADVAGADHLDQDTDISGAAASADKQNTSHVSHIPPVPVAPPLPQVSSIAPPPPLPNLSVPQPHETVDNDDGSDVLSIPDSVESDKEDLAPAGHTPAAMGIPPPPPLPNF.

2 stretches are compositionally biased toward polar residues: residues 1-10 (MYQYSNQTGN) and 20-33 (PLQN…QQTA). Disordered regions lie at residues 1–33 (MYQY…QQTA) and 52–114 (NQNQ…QLTQ). 2 consecutive EH domains span residues 206–295 (DQAK…VSSF) and 569–657 (EKSL…STKI). EF-hand domains are found at residues 239-274 (LQPS…INNV) and 601-636 (LNRS…VYGR). Ca(2+) contacts are provided by Asp614, Asn616, Thr618, Gln620, and Glu625. Disordered stretches follow at residues 668-737 (SSSD…TKMD) and 971-1374 (KKEA…LPNF). Residues 706 to 783 (DNDADKERQR…QKLAVRNQSI (78 aa)) are a coiled coil. Composition is skewed to basic and acidic residues over residues 708 to 737 (DADK…TKMD) and 971 to 1012 (KKEA…ESSK). The span at 1027–1053 (QTANASQTPFEEVISSPQKMEVTSTAG) shows a compositional bias: polar residues. Residues 1050 to 1103 (STAGEDNEEEDEEERKLKEQLELLKQKKNAEKEKRLADLRRQIEEAEKEEEHPS) adopt a coiled-coil conformation. The span at 1063–1102 (ERKLKEQLELLKQKKNAEKEKRLADLRRQIEEAEKEEEHP) shows a compositional bias: basic and acidic residues. Over residues 1103–1118 (SVAQSNSGNVQSSSNQ) the composition is skewed to low complexity. Residues 1124-1168 (VANSQPQNLQNTHITTKPLSLNQTGSSYDMASNTYFKPTQTSQSA) are compositionally biased toward polar residues. Basic and acidic residues predominate over residues 1169–1185 (FDREKAEQQRKIQRGLE). A compositionally biased stretch (acidic residues) spans 1186–1197 (SDDDGWSDDDDD). Polar residues-rich tracts occupy residues 1201–1222 (KPNT…QPGM) and 1257–1266 (ESSIPMTSNA). Composition is skewed to pro residues over residues 1299–1320 (PPVP…PPLP) and 1365–1374 (IPPPPPLPNF).

The protein belongs to the PAN1 family. Component of the PAN1 actin cytoskeleton-regulatory complex.

It is found in the cell membrane. Its subcellular location is the endosome membrane. It localises to the cytoplasm. The protein localises to the cytoskeleton. The protein resides in the actin patch. In terms of biological role, component of the PAN1 actin cytoskeleton-regulatory complex required for the internalization of endosomes during actin-coupled endocytosis. The complex links the site of endocytosis to the cell membrane-associated actin cytoskeleton. Mediates uptake of external molecules and vacuolar degradation of plasma membrane proteins. Plays a role in the proper organization of the cell membrane-associated actin cytoskeleton and promotes its destabilization. The chain is Actin cytoskeleton-regulatory complex protein PAN1 (PAN1) from Candida glabrata (strain ATCC 2001 / BCRC 20586 / JCM 3761 / NBRC 0622 / NRRL Y-65 / CBS 138) (Yeast).